Consider the following 429-residue polypeptide: Adenylosuccinate synthetase (429 aa).

GTP contacts are provided by residues G12–K18 and G40–T42. The active-site Proton acceptor is the D13. Mg(2+) is bound by residues D13 and G40. Residues D13–K16, N38–H41, T128, R142, Q223, T238, and R302 each bind IMP. Catalysis depends on H41, which acts as the Proton donor. V298 to R304 lines the substrate pocket. GTP-binding positions include R304, K330–D332, and G412–G414.

This sequence belongs to the adenylosuccinate synthetase family. In terms of assembly, homodimer. Mg(2+) serves as cofactor.

The protein resides in the cytoplasm. The catalysed reaction is IMP + L-aspartate + GTP = N(6)-(1,2-dicarboxyethyl)-AMP + GDP + phosphate + 2 H(+). It participates in purine metabolism; AMP biosynthesis via de novo pathway; AMP from IMP: step 1/2. Functionally, plays an important role in the de novo pathway of purine nucleotide biosynthesis. Catalyzes the first committed step in the biosynthesis of AMP from IMP. This is Adenylosuccinate synthetase from Micrococcus luteus (strain ATCC 4698 / DSM 20030 / JCM 1464 / CCM 169 / CCUG 5858 / IAM 1056 / NBRC 3333 / NCIMB 9278 / NCTC 2665 / VKM Ac-2230) (Micrococcus lysodeikticus).